Here is a 258-residue protein sequence, read N- to C-terminus: Methionine aminopeptidase (258 aa).

Histidine 84 serves as a coordination point for substrate. A divalent metal cation-binding residues include aspartate 102, aspartate 113, and histidine 176. Substrate is bound at residue histidine 183. The a divalent metal cation site is built by glutamate 211 and glutamate 242.

Belongs to the peptidase M24A family. Methionine aminopeptidase type 1 subfamily. As to quaternary structure, monomer. The cofactor is Co(2+). Zn(2+) serves as cofactor. It depends on Mn(2+) as a cofactor. Requires Fe(2+) as cofactor.

It carries out the reaction Release of N-terminal amino acids, preferentially methionine, from peptides and arylamides.. Removes the N-terminal methionine from nascent proteins. The N-terminal methionine is often cleaved when the second residue in the primary sequence is small and uncharged (Met-Ala-, Cys, Gly, Pro, Ser, Thr, or Val). Requires deformylation of the N(alpha)-formylated initiator methionine before it can be hydrolyzed. The protein is Methionine aminopeptidase of Aquifex aeolicus (strain VF5).